Consider the following 383-residue polypeptide: tRNA-specific 2-thiouridylase MnmA (383 aa).

Residues 9-16 (GMSGGVDS) and Met-35 each bind ATP. The segment at 95-97 (NPD) is interaction with target base in tRNA. Cys-100 serves as the catalytic Nucleophile. An intrachain disulfide couples Cys-100 to Cys-196. ATP is bound at residue Gly-124. The interaction with tRNA stretch occupies residues 146–148 (KDQ). Cys-196 serves as the catalytic Cysteine persulfide intermediate. Positions 308–309 (RY) are interaction with tRNA.

It belongs to the MnmA/TRMU family.

It is found in the cytoplasm. It catalyses the reaction S-sulfanyl-L-cysteinyl-[protein] + uridine(34) in tRNA + AH2 + ATP = 2-thiouridine(34) in tRNA + L-cysteinyl-[protein] + A + AMP + diphosphate + H(+). Functionally, catalyzes the 2-thiolation of uridine at the wobble position (U34) of tRNA, leading to the formation of s(2)U34. The chain is tRNA-specific 2-thiouridylase MnmA from Burkholderia pseudomallei (strain 1106a).